Here is a 181-residue protein sequence, read N- to C-terminus: Alkyl hydroperoxide reductase AhpD (181 aa).

The active-site Proton donor is Cys131. Residues Cys131 and Cys134 are joined by a disulfide bond. The Cysteine sulfenic acid (-SOH) intermediate role is filled by Cys134.

This sequence belongs to the AhpD family.

The enzyme catalyses N(6)-[(R)-dihydrolipoyl]-L-lysyl-[lipoyl-carrier protein] + a hydroperoxide = N(6)-[(R)-lipoyl]-L-lysyl-[lipoyl-carrier protein] + an alcohol + H2O. Antioxidant protein with alkyl hydroperoxidase activity. Required for the reduction of the AhpC active site cysteine residues and for the regeneration of the AhpC enzyme activity. The protein is Alkyl hydroperoxide reductase AhpD of Rhodopseudomonas palustris (strain BisA53).